We begin with the raw amino-acid sequence, 70 residues long: Large ribosomal subunit protein bL28 (70 aa).

The protein belongs to the bacterial ribosomal protein bL28 family.

The chain is Large ribosomal subunit protein bL28 from Maridesulfovibrio salexigens (strain ATCC 14822 / DSM 2638 / NCIMB 8403 / VKM B-1763) (Desulfovibrio salexigens).